The chain runs to 496 residues: Chromosomal replication initiator protein DnaA (496 aa).

Positions 1-76 are domain I, interacts with DnaA modulators; the sequence is MKMDSAVSEE…TELWQEENPQ (76 aa). Residues 76–150 form a domain II region; sequence QILKVEVVVR…AAATGAVLGS (75 aa). A domain III, AAA+ region region spans residues 151–373; sequence PLDPRYTFDT…GAFNQLLFRQ (223 aa). Residues Gly197, Gly199, Lys200, and Thr201 each coordinate ATP. The segment at 374 to 496 is domain IV, binds dsDNA; the sequence is SFEPNISIDR…LKRLINDQAA (123 aa).

Belongs to the DnaA family. As to quaternary structure, oligomerizes as a right-handed, spiral filament on DNA at oriC.

The protein resides in the cytoplasm. Plays an essential role in the initiation and regulation of chromosomal replication. ATP-DnaA binds to the origin of replication (oriC) to initiate formation of the DNA replication initiation complex once per cell cycle. Binds the DnaA box (a 9 base pair repeat at the origin) and separates the double-stranded (ds)DNA. Forms a right-handed helical filament on oriC DNA; dsDNA binds to the exterior of the filament while single-stranded (ss)DNA is stabiized in the filament's interior. The ATP-DnaA-oriC complex binds and stabilizes one strand of the AT-rich DNA unwinding element (DUE), permitting loading of DNA polymerase. After initiation quickly degrades to an ADP-DnaA complex that is not apt for DNA replication. Binds acidic phospholipids. The protein is Chromosomal replication initiator protein DnaA of Brucella abortus biovar 1 (strain 9-941).